The following is a 234-amino-acid chain: Purine nucleoside phosphorylase DeoD-type (234 aa).

H4 contacts a purine D-ribonucleoside. Residues G20, R24, R43, and R87–S90 each bind phosphate. A purine D-ribonucleoside contacts are provided by residues E162, E179–E181, and S203–D204. D204 serves as the catalytic Proton donor.

It belongs to the PNP/UDP phosphorylase family. Homohexamer; trimer of homodimers.

It catalyses the reaction a purine D-ribonucleoside + phosphate = a purine nucleobase + alpha-D-ribose 1-phosphate. It carries out the reaction a purine 2'-deoxy-D-ribonucleoside + phosphate = a purine nucleobase + 2-deoxy-alpha-D-ribose 1-phosphate. Its function is as follows. Catalyzes the reversible phosphorolytic breakdown of the N-glycosidic bond in the beta-(deoxy)ribonucleoside molecules, with the formation of the corresponding free purine bases and pentose-1-phosphate. The sequence is that of Purine nucleoside phosphorylase DeoD-type from Jannaschia sp. (strain CCS1).